We begin with the raw amino-acid sequence, 20 residues long: U1-poneritoxin-Ni1a (20 aa).

Lys20 carries the lysine amide modification.

Belongs to the non-disulfide-bridged peptide (NDBP) superfamily. Medium-length antimicrobial peptide (group 3) family. Ponericin-W subfamily. Expressed by the venom gland.

It localises to the secreted. The protein localises to the target cell membrane. In terms of biological role, has activity against Gram-positive bacteria. Has insecticidal and hemolytic activities. May act by disrupting the integrity of the bacterial cell membrane. This Neoponera inversa (Ant) protein is U1-poneritoxin-Ni1a.